The sequence spans 207 residues: Thaumatin-like protein 1 (207 aa).

8 disulfide bridges follow: Cys9-Cys202, Cys50-Cys60, Cys65-Cys71, Cys117-Cys191, Cys122-Cys174, Cys130-Cys140, Cys144-Cys153, and Cys154-Cys161.

The protein belongs to the thaumatin family. As to quaternary structure, monomer. In terms of processing, not glycosylated.

Its subcellular location is the secreted. Acidic thaumatin-like protein. Exhibits weak beta-1,3-glucanase activity with laminarin as substrate. The sequence is that of Thaumatin-like protein 1 (TLP1) from Manilkara zapota (Sapodilla plum).